We begin with the raw amino-acid sequence, 1305 residues long: Cyclin-G-associated kinase (1305 aa).

N-acetylserine is present on S2. Phosphoserine is present on residues S2 and S16. In terms of domain architecture, Protein kinase spans L40–A317. Residues L46–V54 and K69 contribute to the ATP site. D173 serves as the catalytic Proton acceptor. Positions S397–E564 constitute a Phosphatase tensin-type domain. Phosphoserine is present on S454. Positions S570–E708 constitute a C2 tensin-type domain. Disordered stretches follow at residues V707 to I732 and F747 to T854. S768 is subject to Phosphoserine. T774 carries the post-translational modification Phosphothreonine. Residues S776 to F789 are compositionally biased toward polar residues. S781 is modified (phosphoserine). Phosphothreonine is present on T792. The segment covering L805–V816 has biased composition (polar residues). Phosphoserine occurs at positions 809, 824, and 827. Residues D822 to A832 show a composition bias toward acidic residues. The span at S836–P848 shows a compositional bias: basic and acidic residues. S938 carries the post-translational modification Phosphoserine. Residues D1037 to R1139 are disordered. Low complexity predominate over residues D1084–L1099. Over residues T1111–P1132 the composition is skewed to polar residues. R1122 is subject to Omega-N-methylarginine. S1171 carries the post-translational modification Phosphoserine. Residues S1241–F1305 enclose the J domain.

The protein belongs to the protein kinase superfamily. Ser/Thr protein kinase family.

Its subcellular location is the cytoplasm. It is found in the perinuclear region. The protein resides in the golgi apparatus. It localises to the trans-Golgi network. The protein localises to the cell junction. Its subcellular location is the focal adhesion. It is found in the cytoplasmic vesicle. The protein resides in the clathrin-coated vesicle. It catalyses the reaction L-seryl-[protein] + ATP = O-phospho-L-seryl-[protein] + ADP + H(+). The catalysed reaction is L-threonyl-[protein] + ATP = O-phospho-L-threonyl-[protein] + ADP + H(+). In terms of biological role, associates with cyclin G and CDK5. Seems to act as an auxilin homolog that is involved in the uncoating of clathrin-coated vesicles by Hsc70 in non-neuronal cells. Expression oscillates slightly during the cell cycle, peaking at G1. May play a role in clathrin-mediated endocytosis and intracellular trafficking, and in the dynamics of clathrin assembly/disassembly. The chain is Cyclin-G-associated kinase from Mus musculus (Mouse).